A 129-amino-acid chain; its full sequence is Large ribosomal subunit protein bL19 (129 aa).

Belongs to the bacterial ribosomal protein bL19 family.

Functionally, this protein is located at the 30S-50S ribosomal subunit interface and may play a role in the structure and function of the aminoacyl-tRNA binding site. This chain is Large ribosomal subunit protein bL19, found in Granulibacter bethesdensis (strain ATCC BAA-1260 / CGDNIH1).